Reading from the N-terminus, the 547-residue chain is CTP synthase (547 aa).

The interval 1–265 (MARFVFITGG…DQAVLDAFSI (265 aa)) is amidoligase domain. A CTP-binding site is contributed by Ser13. Ser13 provides a ligand contact to UTP. ATP contacts are provided by residues 14–19 (SLGKGL) and Asp71. 2 residues coordinate Mg(2+): Asp71 and Glu139. Residues 146–148 (DIE), 186–191 (KTKPTQ), and Lys222 contribute to the CTP site. Residues 186 to 191 (KTKPTQ) and Lys222 contribute to the UTP site. Residues 291 to 546 (NVAIVGKYTQ…VRAAKEVSRL (256 aa)) form the Glutamine amidotransferase type-1 domain. Gly353 provides a ligand contact to L-glutamine. Cys380 (nucleophile; for glutamine hydrolysis) is an active-site residue. Residues 381 to 384 (LGMQ), Glu404, and Arg474 each bind L-glutamine. Catalysis depends on residues His519 and Glu521.

This sequence belongs to the CTP synthase family. In terms of assembly, homotetramer.

The catalysed reaction is UTP + L-glutamine + ATP + H2O = CTP + L-glutamate + ADP + phosphate + 2 H(+). It catalyses the reaction L-glutamine + H2O = L-glutamate + NH4(+). The enzyme catalyses UTP + NH4(+) + ATP = CTP + ADP + phosphate + 2 H(+). It participates in pyrimidine metabolism; CTP biosynthesis via de novo pathway; CTP from UDP: step 2/2. Its activity is regulated as follows. Allosterically activated by GTP, when glutamine is the substrate; GTP has no effect on the reaction when ammonia is the substrate. The allosteric effector GTP functions by stabilizing the protein conformation that binds the tetrahedral intermediate(s) formed during glutamine hydrolysis. Inhibited by the product CTP, via allosteric rather than competitive inhibition. Its function is as follows. Catalyzes the ATP-dependent amination of UTP to CTP with either L-glutamine or ammonia as the source of nitrogen. Regulates intracellular CTP levels through interactions with the four ribonucleotide triphosphates. This Dinoroseobacter shibae (strain DSM 16493 / NCIMB 14021 / DFL 12) protein is CTP synthase.